The primary structure comprises 397 residues: Dual-specificity RNA methyltransferase RlmN (397 aa).

E120 (proton acceptor) is an active-site residue. Positions 126 to 369 constitute a Radical SAM core domain; that stretch reads ETDRGTLCVS…VRTPRGRDIL (244 aa). C133 and C372 are oxidised to a cystine. [4Fe-4S] cluster is bound by residues C140, C144, and C147. Residues 198-199, S230, 252-254, and N329 each bind S-adenosyl-L-methionine; these read GE and SLH. Catalysis depends on C372, which acts as the S-methylcysteine intermediate.

The protein belongs to the radical SAM superfamily. RlmN family. The cofactor is [4Fe-4S] cluster.

The protein localises to the cytoplasm. It catalyses the reaction adenosine(2503) in 23S rRNA + 2 reduced [2Fe-2S]-[ferredoxin] + 2 S-adenosyl-L-methionine = 2-methyladenosine(2503) in 23S rRNA + 5'-deoxyadenosine + L-methionine + 2 oxidized [2Fe-2S]-[ferredoxin] + S-adenosyl-L-homocysteine. It carries out the reaction adenosine(37) in tRNA + 2 reduced [2Fe-2S]-[ferredoxin] + 2 S-adenosyl-L-methionine = 2-methyladenosine(37) in tRNA + 5'-deoxyadenosine + L-methionine + 2 oxidized [2Fe-2S]-[ferredoxin] + S-adenosyl-L-homocysteine. In terms of biological role, specifically methylates position 2 of adenine 2503 in 23S rRNA and position 2 of adenine 37 in tRNAs. m2A2503 modification seems to play a crucial role in the proofreading step occurring at the peptidyl transferase center and thus would serve to optimize ribosomal fidelity. The chain is Dual-specificity RNA methyltransferase RlmN from Nitrobacter winogradskyi (strain ATCC 25391 / DSM 10237 / CIP 104748 / NCIMB 11846 / Nb-255).